The following is a 239-amino-acid chain: Uridylate kinase (239 aa).

13–16 contacts ATP; sequence KISG. Gly-55 is a binding site for UMP. Gly-56 and Arg-60 together coordinate ATP. UMP-binding positions include Asp-75 and 136-143; that span reads LGIPFFTT. Thr-163, Tyr-169, and Asp-172 together coordinate ATP.

This sequence belongs to the UMP kinase family. As to quaternary structure, homohexamer.

Its subcellular location is the cytoplasm. It catalyses the reaction UMP + ATP = UDP + ADP. It participates in pyrimidine metabolism; CTP biosynthesis via de novo pathway; UDP from UMP (UMPK route): step 1/1. With respect to regulation, inhibited by UTP. Catalyzes the reversible phosphorylation of UMP to UDP. This chain is Uridylate kinase, found in Buchnera aphidicola subsp. Cinara cedri (strain Cc).